A 215-amino-acid polypeptide reads, in one-letter code: Ras-related protein Rab-5A (215 aa).

10 residues coordinate GTP: serine 29, alanine 30, glycine 32, lysine 33, serine 34, serine 35, histidine 46, glutamate 47, threonine 52, and glycine 78. Residue serine 34 participates in Mg(2+) binding. 2 short sequence motifs (switch) span residues glutamine 44–alanine 56 and alanine 77–alanine 93. Residue threonine 52 coordinates Mg(2+). Position 84 is a phosphoserine; by LRRK2 (serine 84). Arginine 120 carries (Microbial infection) N-beta-linked (GlcNAc) arginine glycosylation. GTP is bound by residues asparagine 133, lysine 134, aspartate 136, alanine 164, and lysine 165. The segment at leucine 181–asparagine 215 is disordered. Residues glutamate 203 to asparagine 215 are compositionally biased toward polar residues. Residues cysteine 212 and cysteine 213 are each lipidated (S-geranylgeranyl cysteine).

Belongs to the small GTPase superfamily. Rab family. Interacts with SGSM1 and SGSM3. Interacts with PIK3CB. Interacts with GDI1; this promotes dissociation from membranes; phosphorylation at Ser-84 disrupts this interaction. Interacts with GDI2; phosphorylation at Ser-84 disrupts the interaction. Interacts with EEA1. Interacts with RIN1 and GAPVD1, which regulate its pathway, probably by acting as a GEF. Interacts with RINL. Interacts with ALS2CL, SUN2, ZFYVE20 and RUFY1. Interacts with RABEP1; one RABEP1 homodimer binds two RAB5A chains, but at opposite sides of the dimer. Interacts with OCRL. Interacts with INPP5F. May be a component of a complex composed of RAB5A, DYN2 and PIK3C3. Does not interact with BLOC-3 complex (heterodimer of HPS1 and HPS4). Interacts with CLN5. Interacts with APPL2. Interacts with F8A1/F8A2/F8A3. Found in a complex with F8A1/F8A2/F8A3, HTT and RAB5A; mediates the recruitment of HTT by RAB5A onto early endosomes. Interacts with ATP9A. Interacts with PPP1R21; mediates the recruitment of FERRY complex by RAB5A onto early endosomes. Mg(2+) serves as cofactor. In terms of processing, phosphorylation of Ser-84 in the switch II region by LRRK2 prevents the association of RAB regulatory proteins, including RAB GDP dissociation inhibitors GDI1 and GDI2. (Microbial infection) Glycosylated on arginine residues by S.typhimurium protein Ssek3.

The protein localises to the cell membrane. It localises to the early endosome membrane. The protein resides in the melanosome. Its subcellular location is the cytoplasmic vesicle. It is found in the cell projection. The protein localises to the ruffle. It localises to the membrane. The protein resides in the cytoplasm. Its subcellular location is the cytosol. It is found in the phagosome membrane. The protein localises to the endosome membrane. The enzyme catalyses GTP + H2O = GDP + phosphate + H(+). Its activity is regulated as follows. Regulated by guanine nucleotide exchange factors (GEFs) including RINL, which promote the exchange of bound GDP for free GTP. Regulated by GTPase activating proteins (GAPs) which increase the GTP hydrolysis activity. Inhibited by GDP dissociation inhibitors (GDIs). In terms of biological role, the small GTPases Rab are key regulators of intracellular membrane trafficking, from the formation of transport vesicles to their fusion with membranes. Rabs cycle between an inactive GDP-bound form and an active GTP-bound form that is able to recruit to membranes different sets of downstream effectors directly responsible for vesicle formation, movement, tethering and fusion. RAB5A is required for the fusion of plasma membranes and early endosomes. Contributes to the regulation of filopodia extension. Required for the exosomal release of SDCBP, CD63, PDCD6IP and syndecan. Regulates maturation of apoptotic cell-containing phagosomes, probably downstream of DYN2 and PIK3C3. The protein is Ras-related protein Rab-5A of Homo sapiens (Human).